We begin with the raw amino-acid sequence, 158 residues long: 2-C-methyl-D-erythritol 2,4-cyclodiphosphate synthase (158 aa).

2 residues coordinate a divalent metal cation: Asp9 and His11. Residues 9 to 11 (DVH) and 35 to 36 (HS) each bind 4-CDP-2-C-methyl-D-erythritol 2-phosphate. His43 contributes to the a divalent metal cation binding site. Residues 57 to 59 (DLG), 62 to 66 (FPDTD), 133 to 136 (TTTE), Phe140, and Arg143 each bind 4-CDP-2-C-methyl-D-erythritol 2-phosphate.

It belongs to the IspF family. In terms of assembly, homotrimer. A divalent metal cation is required as a cofactor.

The enzyme catalyses 4-CDP-2-C-methyl-D-erythritol 2-phosphate = 2-C-methyl-D-erythritol 2,4-cyclic diphosphate + CMP. It functions in the pathway isoprenoid biosynthesis; isopentenyl diphosphate biosynthesis via DXP pathway; isopentenyl diphosphate from 1-deoxy-D-xylulose 5-phosphate: step 4/6. Functionally, involved in the biosynthesis of isopentenyl diphosphate (IPP) and dimethylallyl diphosphate (DMAPP), two major building blocks of isoprenoid compounds. Catalyzes the conversion of 4-diphosphocytidyl-2-C-methyl-D-erythritol 2-phosphate (CDP-ME2P) to 2-C-methyl-D-erythritol 2,4-cyclodiphosphate (ME-CPP) with a corresponding release of cytidine 5-monophosphate (CMP). The protein is 2-C-methyl-D-erythritol 2,4-cyclodiphosphate synthase of Desulfitobacterium hafniense (strain DSM 10664 / DCB-2).